A 368-amino-acid chain; its full sequence is MPLTGRKIRVLVVDDSAFMRKVLKDIINSDPELEVCGEARDGIEAIEMVQKCRPDVVTLDVEMPRMNGLDALRVIMKKYPVPVIMISALTQEGAEATIKALEYGAIDFIPKPSSSISINMRELKDEIIAKIKEAAKVPRRFLELRRIRLLRVQKAKKVKPSVPARIAVAIAASTGGPQSLLKIFPKFPENLKAGILLVQHMPPGFTRSFAKRLDSVSKIDVKEAEEGDVVEEGKAYVAPGDYHMEVTLRGGKPVITLNKKPKMHGVRPAADPMMITAAQVFGRRTVGVVMTGMGRDGAQGIVEIKKRGGITIAQDEKTSIIFGMPKAAIETGMVDYVVPLEKIPETVVRAVEMIRGGGNLGRHVTIPR.

The 118-residue stretch at 9–126 folds into the Response regulatory domain; that stretch reads RVLVVDDSAF…SINMRELKDE (118 aa). The residue at position 60 (Asp60) is a 4-aspartylphosphate. In terms of domain architecture, CheB-type methylesterase spans 161–354; it reads SVPARIAVAI…ETVVRAVEMI (194 aa). Catalysis depends on residues Ser173, His200, and Asp296.

Belongs to the CheB family. Phosphorylated by CheA. Phosphorylation of the N-terminal regulatory domain activates the methylesterase activity.

The protein localises to the cytoplasm. It catalyses the reaction [protein]-L-glutamate 5-O-methyl ester + H2O = L-glutamyl-[protein] + methanol + H(+). The enzyme catalyses L-glutaminyl-[protein] + H2O = L-glutamyl-[protein] + NH4(+). In terms of biological role, involved in chemotaxis. Part of a chemotaxis signal transduction system that modulates chemotaxis in response to various stimuli. Catalyzes the demethylation of specific methylglutamate residues introduced into the chemoreceptors (methyl-accepting chemotaxis proteins or MCP) by CheR. Also mediates the irreversible deamidation of specific glutamine residues to glutamic acid. The protein is Protein-glutamate methylesterase/protein-glutamine glutaminase of Pyrococcus abyssi (strain GE5 / Orsay).